Here is a 961-residue protein sequence, read N- to C-terminus: Retinoblastoma-like protein homolog lin-35 (961 aa).

Disordered stretches follow at residues 1-43 (MPKR…PPAK) and 55-129 (GGVQ…TPPP). A compositionally biased stretch (polar residues) spans 68–81 (ELTQMTIKQETEGN). The segment covering 107–119 (GEDDDYEEDDADS) has biased composition (acidic residues). Position 714 is a phosphoserine; by CDK4 (Ser714). Thr719 carries the phosphothreonine; by CDK4 modification.

Belongs to the retinoblastoma protein (RB) family. In terms of assembly, component of the DRM complex, at least composed of lin-9, lin-35, lin-37, lin-52, lin-53, lin-54, dpl-1 and efl-1. Interacts with lin-53. Interacts (via C-terminus) with dpl-1 (via C-terminus) and efl-1 (via C-terminus). Interacts (via C-terminus) with lin-8. Post-translationally, phosphorylated by the cyclin dependent kinase cdk-4. Phosphorylation inhibits the transcriptional repressor activity of lin-35 and allows for progression through the G1 phase of the cell cycle during postembryonic development.

Its subcellular location is the nucleus. Key regulator of cell division which acts as a transcriptional repressor and negatively regulates cell cycle progression in its active unphosphorylated form, but allows cell cycle progression when phosphorylated. When unphosphorylated and in its active form, interacts with E2F transcription factors such as efl-1 to repress their transcriptional activity and negatively regulate the progression through the G1 phase of the cell cycle during postembryonic development. May furthermore act with cell cycle regulator cki-1 to negatively regulate cell cycle progression. Acts redundantly with lin-53, fzr-1 and lin-23 to control cell cycle progression by regulating the expression of G1 phase cyclins. In particular, negatively regulates the expression of the cyclin E homolog cye-1, which is essential for the G1/S phase transition. Regulates cell division in the intestinal lineage, repressing the expression of genes such as cdc-25.2, which are required for intestinal cells to transition from the karyokinesis cell cycle (also known as nuclear division) to endoreplication, a specific growth pathway in the intestinal epithelium required for feeding and gut development in growing larvae during the L1 stage molt. Its role as a transcriptional repressor in the regulation of intestinal cell division during postembryonic development is most likely in complex with an E2F cell cycle regulatory transcription factor efl-1 and its binding partner the synthetic multivulva class B protein dpl-1. Synthetic multivulva (synMuv) class B protein. SynMuv proteins are required to repress the induction of vulval development by Ras signaling and probably act by forming the multiprotein DRM complex that represses transcription. Together with synMuv class B protein lin-53, and redundantly with synMuv class A protein lin-15A, represses transcription to control vulval development, most likely through antagonization of the Ras-signaling pathway in the major hypodermal syncytium hyp7. Acts redundantly with the transcriptional corepressor spr-1 and the zinc finger protein zfp-2 to play a role in vulval morphogenesis, promote germline proliferation and somatic gonad development. Acts redundantly with ubc-18 in the regulation of pharyngeal morphogenesis during embryonic development by negatively regulating the expression of proteins such as sup-35. Functions with the SWI/SNF complex and proteins such as pha-1 to regulate larval development. Functions redundantly with xnp-1 to regulate somatic gonad development. Acts redundantly with slr-2 to regulate the expression of intestinal genes required for nutrient utilization. Regulates transcription in response to starvation. Furthermore, in response to starvation, promotes germ cell programmed cell death by negatively regulating the expression of the anti-apoptotic protein ced-9. Conversely, in conjunction with mcd-1, efl-1 and the synthetic multivulva class B proteins dpl-1, lin-37 and lin-52, may also regulate transcription to promote programmed cell death independently of ced-1, ced-8 and ced-9 cell death pathways. Directly involved in heterochromatin formation by maintaining overall chromatin structure and, in particular, that of constitutive heterochromatin by stabilizing histone methylation. In particular, negatively regulates the expression of mes-4, a histone methyltransferase that controls the expression of germline specific genes. May play a role in double strand break formation during meiosis. May suppress sensitivity to RNAi. May play a role in the response to endoplasmic reticulum (ER) stress. The sequence is that of Retinoblastoma-like protein homolog lin-35 from Caenorhabditis elegans.